A 380-amino-acid polypeptide reads, in one-letter code: Lipid-A-disaccharide synthase (380 aa).

It belongs to the LpxB family.

The catalysed reaction is a lipid X + a UDP-2-N,3-O-bis[(3R)-3-hydroxyacyl]-alpha-D-glucosamine = a lipid A disaccharide + UDP + H(+). Its pathway is bacterial outer membrane biogenesis; LPS lipid A biosynthesis. Functionally, condensation of UDP-2,3-diacylglucosamine and 2,3-diacylglucosamine-1-phosphate to form lipid A disaccharide, a precursor of lipid A, a phosphorylated glycolipid that anchors the lipopolysaccharide to the outer membrane of the cell. The sequence is that of Lipid-A-disaccharide synthase from Rickettsia typhi (strain ATCC VR-144 / Wilmington).